Consider the following 124-residue polypeptide: Large ribosomal subunit protein bL12 (124 aa).

Belongs to the bacterial ribosomal protein bL12 family. Homodimer. Part of the ribosomal stalk of the 50S ribosomal subunit. Forms a multimeric L10(L12)X complex, where L10 forms an elongated spine to which 2 to 4 L12 dimers bind in a sequential fashion. Binds GTP-bound translation factors.

Its function is as follows. Forms part of the ribosomal stalk which helps the ribosome interact with GTP-bound translation factors. Is thus essential for accurate translation. The chain is Large ribosomal subunit protein bL12 from Cupriavidus metallidurans (strain ATCC 43123 / DSM 2839 / NBRC 102507 / CH34) (Ralstonia metallidurans).